We begin with the raw amino-acid sequence, 452 residues long: Imaginal disk growth factor 6 (452 aa).

The first 18 residues, 1 to 18 (MIIKALAIVSLCLASIQA), serve as a signal peptide directing secretion. Residues 29–452 (KHLVCYYDSA…LRAIKYRLTN (424 aa)) enclose the GH18 domain. The cysteines at positions 33 and 60 are disulfide-linked. Asn233 carries N-linked (GlcNAc...) asparagine glycosylation. A disulfide bond links Cys352 and Cys435.

This sequence belongs to the glycosyl hydrolase 18 family. IDGF subfamily. Post-translationally, glycosylated. In terms of tissue distribution, in larvae, it is expressed in the fat body and by hemocytes.

Its subcellular location is the secreted. In terms of biological role, probably required to stimulate the proliferation, polarization and motility of imaginal disk cells. May act by stabilizing the binding of insulin-like peptides to its receptor through a simultaneous interaction with both molecules to form a multiprotein signaling complex. In Drosophila melanogaster (Fruit fly), this protein is Imaginal disk growth factor 6.